We begin with the raw amino-acid sequence, 268 residues long: Ubiquinone biosynthesis protein COQ4 homolog, mitochondrial (268 aa).

Zn(2+) contacts are provided by His-171, Asp-172, His-175, and Glu-187.

It belongs to the COQ4 family. Component of a multi-subunit COQ enzyme complex. Zn(2+) is required as a cofactor.

The protein localises to the mitochondrion inner membrane. The enzyme catalyses a 4-hydroxy-3-methoxy-5-(all-trans-polyprenyl)benzoate + H(+) = a 2-methoxy-6-(all-trans-polyprenyl)phenol + CO2. It functions in the pathway cofactor biosynthesis; ubiquinone biosynthesis. Its function is as follows. Lyase that catalyzes the C1-decarboxylation of 4-hydroxy-3-methoxy-5-(all-trans-polyprenyl)benzoic acid into 2-methoxy-6-(all-trans-polyprenyl)phenol during ubiquinone biosynthesis. The sequence is that of Ubiquinone biosynthesis protein COQ4 homolog, mitochondrial from Drosophila melanogaster (Fruit fly).